A 359-amino-acid chain; its full sequence is Aflatoxin B1 aldehyde reductase member 2 (359 aa).

A mitochondrion-targeting transit peptide spans 1 to 38 (MLSAASRVVSRAAVHCALRSPPPEARALAMSRPPPPRV). Ser40 bears the Phosphoserine mark. Asp72 lines the NADP(+) pocket. The active-site Proton donor is the Tyr77. Position 128 is an N6-acetyllysine (Lys128). His141 contacts substrate. Residues 171–172 (SN), Gln197, 226–236 (NPLAGGLLTGK), and Arg250 contribute to the NADP(+) site. Lys236 carries the N6-succinyllysine modification. Ser255 is modified (phosphoserine). Substrate contacts are provided by Tyr260 and Arg263. 318 to 326 (SSLEQLEQN) lines the NADP(+) pocket. Arg359 lines the substrate pocket.

Belongs to the aldo/keto reductase family. Aldo/keto reductase 2 subfamily. In terms of assembly, homodimer. As to expression, detected in brain, liver, small intestine and testis, and at lower levels in heart, prostate, skeletal muscle and spleen. Detected in kidney proximal and distal tubules, endothelial cells lining the Bowman's capsules and some cysts. Detected at low levels in lung and pancreas (at protein level). Widely expressed.

It localises to the mitochondrion. The protein localises to the golgi apparatus. The protein resides in the cytoplasm. It carries out the reaction 4-hydroxybutanoate + NADP(+) = succinate semialdehyde + NADPH + H(+). Its function is as follows. Catalyzes the NADPH-dependent reduction of succinic semialdehyde to gamma-hydroxybutyrate. May have an important role in producing the neuromodulator gamma-hydroxybutyrate (GHB). Has broad substrate specificity. Has NADPH-dependent aldehyde reductase activity towards 2-carboxybenzaldehyde, 2-nitrobenzaldehyde and pyridine-2-aldehyde (in vitro). Can reduce 1,2-naphthoquinone and 9,10-phenanthrenequinone (in vitro). Can reduce the dialdehyde protein-binding form of aflatoxin B1 (AFB1) to the non-binding AFB1 dialcohol. May be involved in protection of liver against the toxic and carcinogenic effects of AFB1, a potent hepatocarcinogen. In Homo sapiens (Human), this protein is Aflatoxin B1 aldehyde reductase member 2 (AKR7A2).